Reading from the N-terminus, the 623-residue chain is Ciliated left-right organizer metallopeptidase (623 aa).

The N-terminal stretch at 1–20 is a signal peptide; the sequence is MSFLLCIGILLLPWFPCVCG. Over 21–578 the chain is Extracellular; sequence KCIFDQIQRS…LFLVSEAKIS (558 aa). His-249 contributes to the Zn(2+) binding site. Glu-250 is a catalytic residue. Positions 253 and 326 each coordinate Zn(2+). The helical transmembrane segment at 579–599 threads the bilayer; the sequence is LAAVLSLMAVFALLSAAVLLY. Residues 600–623 lie on the Cytoplasmic side of the membrane; sequence RKNLSVRVHAASYRTPLPHILYRN.

It belongs to the peptidase M8 family. It depends on Zn(2+) as a cofactor. In terms of tissue distribution, expressed specifically in dorsal forerunner cells (DFCs) that form a ciliated Kupffer's vesicle later.

The protein resides in the membrane. Functionally, plays an essential role for patterning the left-right axis. Requires solely on the left side, downstream of the leftward flow, but upstream of dand5, a nodal inhibitor involved in left-right patterning. In Danio rerio (Zebrafish), this protein is Ciliated left-right organizer metallopeptidase (cirop).